The sequence spans 938 residues: Isoleucine--tRNA ligase (938 aa).

A 'HIGH' region motif is present at residues Pro-58 to His-68. An L-isoleucyl-5'-AMP-binding site is contributed by Glu-561. The 'KMSKS' region motif lies at Lys-602–Ser-606. Lys-605 contributes to the ATP binding site. 4 residues coordinate Zn(2+): Cys-901, Cys-904, Cys-921, and Cys-924.

Belongs to the class-I aminoacyl-tRNA synthetase family. IleS type 1 subfamily. Monomer. It depends on Zn(2+) as a cofactor.

Its subcellular location is the cytoplasm. It catalyses the reaction tRNA(Ile) + L-isoleucine + ATP = L-isoleucyl-tRNA(Ile) + AMP + diphosphate. Catalyzes the attachment of isoleucine to tRNA(Ile). As IleRS can inadvertently accommodate and process structurally similar amino acids such as valine, to avoid such errors it has two additional distinct tRNA(Ile)-dependent editing activities. One activity is designated as 'pretransfer' editing and involves the hydrolysis of activated Val-AMP. The other activity is designated 'posttransfer' editing and involves deacylation of mischarged Val-tRNA(Ile). This Serratia proteamaculans (strain 568) protein is Isoleucine--tRNA ligase.